Reading from the N-terminus, the 341-residue chain is tRNA N6-adenosine threonylcarbamoyltransferase (341 aa).

Residues His115 and His119 each contribute to the Fe cation site. Residues Leu138 to Gly142, Asp171, Gly184, and Asn276 contribute to the substrate site. A Fe cation-binding site is contributed by Asp304.

Belongs to the KAE1 / TsaD family. Fe(2+) is required as a cofactor.

The protein localises to the cytoplasm. It catalyses the reaction L-threonylcarbamoyladenylate + adenosine(37) in tRNA = N(6)-L-threonylcarbamoyladenosine(37) in tRNA + AMP + H(+). Functionally, required for the formation of a threonylcarbamoyl group on adenosine at position 37 (t(6)A37) in tRNAs that read codons beginning with adenine. Is involved in the transfer of the threonylcarbamoyl moiety of threonylcarbamoyl-AMP (TC-AMP) to the N6 group of A37, together with TsaE and TsaB. TsaD likely plays a direct catalytic role in this reaction. The sequence is that of tRNA N6-adenosine threonylcarbamoyltransferase from Stenotrophomonas maltophilia (strain R551-3).